Here is a 327-residue protein sequence, read N- to C-terminus: Glycerol-3-phosphate dehydrogenase [NAD(P)+] (327 aa).

Positions 13, 34, and 107 each coordinate NADPH. Residues Lys107 and Gly135 each coordinate sn-glycerol 3-phosphate. Ala139 is an NADPH binding site. Residues Lys190, Asp243, Ser253, Arg254, and Asn255 each contribute to the sn-glycerol 3-phosphate site. Lys190 serves as the catalytic Proton acceptor. Arg254 provides a ligand contact to NADPH. NADPH-binding residues include Val276 and Glu277.

It belongs to the NAD-dependent glycerol-3-phosphate dehydrogenase family.

It is found in the cytoplasm. It catalyses the reaction sn-glycerol 3-phosphate + NAD(+) = dihydroxyacetone phosphate + NADH + H(+). The enzyme catalyses sn-glycerol 3-phosphate + NADP(+) = dihydroxyacetone phosphate + NADPH + H(+). Its pathway is membrane lipid metabolism; glycerophospholipid metabolism. Catalyzes the reduction of the glycolytic intermediate dihydroxyacetone phosphate (DHAP) to sn-glycerol 3-phosphate (G3P), the key precursor for phospholipid synthesis. The chain is Glycerol-3-phosphate dehydrogenase [NAD(P)+] from Rhizobium johnstonii (strain DSM 114642 / LMG 32736 / 3841) (Rhizobium leguminosarum bv. viciae).